The primary structure comprises 74 residues: Cytochrome c oxidase subunit 2 (74 aa).

Topologically, residues 1 to 14 (MAHPSQLGLQDAAS) are mitochondrial intermembrane. Residues 15-45 (PVMEELLHFHDHALMIVFLISTLVLYIIVAM) traverse the membrane as a helical segment. At 46-74 (VSTKLTDKYTIDSQEIEIVWTVLPAVILI) the chain is on the mitochondrial matrix side.

The protein belongs to the cytochrome c oxidase subunit 2 family. Component of the cytochrome c oxidase (complex IV, CIV), a multisubunit enzyme composed of 14 subunits. The complex is composed of a catalytic core of 3 subunits MT-CO1, MT-CO2 and MT-CO3, encoded in the mitochondrial DNA, and 11 supernumerary subunits COX4I, COX5A, COX5B, COX6A, COX6B, COX6C, COX7A, COX7B, COX7C, COX8 and NDUFA4, which are encoded in the nuclear genome. The complex exists as a monomer or a dimer and forms supercomplexes (SCs) in the inner mitochondrial membrane with NADH-ubiquinone oxidoreductase (complex I, CI) and ubiquinol-cytochrome c oxidoreductase (cytochrome b-c1 complex, complex III, CIII), resulting in different assemblies (supercomplex SCI(1)III(2)IV(1) and megacomplex MCI(2)III(2)IV(2)). Found in a complex with TMEM177, COA6, COX18, COX20, SCO1 and SCO2. Interacts with TMEM177 in a COX20-dependent manner. Interacts with COX20. Interacts with COX16. Cu cation is required as a cofactor.

It is found in the mitochondrion inner membrane. It carries out the reaction 4 Fe(II)-[cytochrome c] + O2 + 8 H(+)(in) = 4 Fe(III)-[cytochrome c] + 2 H2O + 4 H(+)(out). Its function is as follows. Component of the cytochrome c oxidase, the last enzyme in the mitochondrial electron transport chain which drives oxidative phosphorylation. The respiratory chain contains 3 multisubunit complexes succinate dehydrogenase (complex II, CII), ubiquinol-cytochrome c oxidoreductase (cytochrome b-c1 complex, complex III, CIII) and cytochrome c oxidase (complex IV, CIV), that cooperate to transfer electrons derived from NADH and succinate to molecular oxygen, creating an electrochemical gradient over the inner membrane that drives transmembrane transport and the ATP synthase. Cytochrome c oxidase is the component of the respiratory chain that catalyzes the reduction of oxygen to water. Electrons originating from reduced cytochrome c in the intermembrane space (IMS) are transferred via the dinuclear copper A center (CU(A)) of subunit 2 and heme A of subunit 1 to the active site in subunit 1, a binuclear center (BNC) formed by heme A3 and copper B (CU(B)). The BNC reduces molecular oxygen to 2 water molecules using 4 electrons from cytochrome c in the IMS and 4 protons from the mitochondrial matrix. The protein is Cytochrome c oxidase subunit 2 (mt-co2) of Megalops atlanticus (Tarpon).